The following is a 573-amino-acid chain: Globulin-1 S allele (573 aa).

Positions 1–18 (MVSARIVVLLAVLLCAAA) form a signal peptide, or 21. A propeptide spanning residues 19 to 86 (AVASSWEDDN…DRSGEGSSED (68 aa)) is cleaved from the precursor. Residues 65–102 (EKRQERSRHEADDRSGEGSSEDEREREQEKEEKQKDRR) are disordered. Cupin type-1 domains are found at residues 104–262 (YVFD…DRLE) and 311–493 (YSLL…EEVD). A disordered region spans residues 288 to 315 (RHASEGGHGPHWPLPPFGESRGPYSLLD). A glycan (N-linked (GlcNAc...) asparagine) is linked at N349. 2 disordered regions span residues 382–416 (PHRQ…EVGQ) and 498–573 (SRRE…TARM). Residues 390–402 (ESERERGKGRRSE) are compositionally biased toward basic and acidic residues. Residues 403-413 (EEEESSEEQEE) are compositionally biased toward acidic residues. Composition is skewed to basic and acidic residues over residues 525-542 (EERH…REER) and 549-561 (REGR…REEV).

Belongs to the 7S seed storage protein family. Three protein-processing steps occur in the formation of the mature protein from the primary translation product.

The sequence is that of Globulin-1 S allele (GLB1) from Zea mays (Maize).